Here is a 286-residue protein sequence, read N- to C-terminus: MNTVKTVRELRAAVARARSEGKRIGFVPTMGNLHSGHIALITKATQRVDFVVASIFVNPLQFGAGEDLDKYPRTLAADQEKLLEAGCDLLFAPTVEEMYPDGMAGQTRVSVPQLSEGLCGASRPGHFEGVATVVSKLFNMVQPDLAIFGQKDFQQLAVIRALVHDLNMPIQIIGEPTVRAADGLALSSRNGFLSEEERAVAPVVYRTLSSIAESIKQGERDFPALIQAQRQQLEAAGLRPDYLEIRHALTLRPATAEDRDLVILVAAFLGTTRLIDNLHLNLDTPA.

30 to 37 (MGNLHSGH) contacts ATP. Histidine 37 acts as the Proton donor in catalysis. Glutamine 61 lines the (R)-pantoate pocket. A beta-alanine-binding site is contributed by glutamine 61. Residue 149–152 (GQKD) coordinates ATP. (R)-pantoate is bound at residue glutamine 155. Residues valine 178 and 186-189 (LSSR) each bind ATP.

Belongs to the pantothenate synthetase family. As to quaternary structure, homodimer.

The protein localises to the cytoplasm. It carries out the reaction (R)-pantoate + beta-alanine + ATP = (R)-pantothenate + AMP + diphosphate + H(+). Its pathway is cofactor biosynthesis; (R)-pantothenate biosynthesis; (R)-pantothenate from (R)-pantoate and beta-alanine: step 1/1. Catalyzes the condensation of pantoate with beta-alanine in an ATP-dependent reaction via a pantoyl-adenylate intermediate. The sequence is that of Pantothenate synthetase from Pseudomonas fluorescens (strain Pf0-1).